A 335-amino-acid polypeptide reads, in one-letter code: Phospho-N-acetylmuramoyl-pentapeptide-transferase (335 aa).

The next 10 membrane-spanning stretches (helical) occupy residues 3–23 (LTLIAGLISLLLTALIMPHFI), 53–73 (GGTVFLLVASFVSFLFAILFF), 78–98 (SMGLITGILAIVLIYGFIGFL), 118–138 (LSLQIVGGLIFYFLHVVPSGI), 143–163 (VFGFPVHLGLLYIFFVLFWVV), 175–195 (IDGLASISVVISLLTYSVIAI), 200–220 (YDVLLLCGIMIGALLGFFIFN), 226–246 (VFMGDVGSLALGAMLAAISIA), 251–271 (WTLLVIGLVYVFETSSVMLQV), and 314–334 (VDAFLWSVGAVSSLIVLAILY).

This sequence belongs to the glycosyltransferase 4 family. MraY subfamily. Mg(2+) serves as cofactor.

It is found in the cell membrane. The enzyme catalyses UDP-N-acetyl-alpha-D-muramoyl-L-alanyl-gamma-D-glutamyl-L-lysyl-D-alanyl-D-alanine + di-trans,octa-cis-undecaprenyl phosphate = Mur2Ac(oyl-L-Ala-gamma-D-Glu-L-Lys-D-Ala-D-Ala)-di-trans,octa-cis-undecaprenyl diphosphate + UMP. Its pathway is cell wall biogenesis; peptidoglycan biosynthesis. In terms of biological role, catalyzes the initial step of the lipid cycle reactions in the biosynthesis of the cell wall peptidoglycan: transfers peptidoglycan precursor phospho-MurNAc-pentapeptide from UDP-MurNAc-pentapeptide onto the lipid carrier undecaprenyl phosphate, yielding undecaprenyl-pyrophosphoryl-MurNAc-pentapeptide, known as lipid I. The sequence is that of Phospho-N-acetylmuramoyl-pentapeptide-transferase from Streptococcus uberis (strain ATCC BAA-854 / 0140J).